A 492-amino-acid polypeptide reads, in one-letter code: Bifunctional purine biosynthesis protein PurH (492 aa).

The MGS-like domain maps to Met1–Val144.

This sequence belongs to the PurH family.

It catalyses the reaction (6R)-10-formyltetrahydrofolate + 5-amino-1-(5-phospho-beta-D-ribosyl)imidazole-4-carboxamide = 5-formamido-1-(5-phospho-D-ribosyl)imidazole-4-carboxamide + (6S)-5,6,7,8-tetrahydrofolate. The catalysed reaction is IMP + H2O = 5-formamido-1-(5-phospho-D-ribosyl)imidazole-4-carboxamide. It participates in purine metabolism; IMP biosynthesis via de novo pathway; 5-formamido-1-(5-phospho-D-ribosyl)imidazole-4-carboxamide from 5-amino-1-(5-phospho-D-ribosyl)imidazole-4-carboxamide (10-formyl THF route): step 1/1. Its pathway is purine metabolism; IMP biosynthesis via de novo pathway; IMP from 5-formamido-1-(5-phospho-D-ribosyl)imidazole-4-carboxamide: step 1/1. The sequence is that of Bifunctional purine biosynthesis protein PurH from Staphylococcus aureus (strain MSSA476).